The chain runs to 90 residues: SAGA-associated factor 11 (90 aa).

The SGF11-type zinc finger occupies 63–84 (FSCDNCGRKIAGGRFAQHINKC).

The protein belongs to the SGF11 family. Component of the 1.8 MDa SAGA transcription coactivator-HAT complex. SAGA is built of 5 distinct domains with specialized functions. Within the SAGA complex, SUS1, SGF11, SGF73 and UBP8 form an additional subcomplex of SAGA called the DUB module (deubiquitination module). Interacts directly with SGF73, SUS1 and UBP8.

It localises to the nucleus. In terms of biological role, functions as a component of the transcription regulatory histone acetylation (HAT) complex SAGA. At the promoters, SAGA is required for recruitment of the basal transcription machinery. It influences RNA polymerase II transcriptional activity through different activities such as TBP interaction and promoter selectivity, interaction with transcription activators, and chromatin modification through histone acetylation and deubiquitination. SAGA acetylates nucleosomal histone H3 to some extent (to form H3K9ac, H3K14ac, H3K18ac and H3K23ac). SAGA interacts with DNA via upstream activating sequences (UASs). Involved in transcriptional regulation of a subset of SAGA-regulated genes. Within the SAGA complex, participates in a subcomplex, that specifically deubiquitinates histones H2B. The protein is SAGA-associated factor 11 of Lodderomyces elongisporus (strain ATCC 11503 / CBS 2605 / JCM 1781 / NBRC 1676 / NRRL YB-4239) (Yeast).